We begin with the raw amino-acid sequence, 794 residues long: LPS-assembly protein LptD (794 aa).

The first 31 residues, 1 to 31 (MPSHCSSLLCARFRLSSLAVIVALAASGVRA), serve as a signal peptide directing secretion.

This sequence belongs to the LptD family. In terms of assembly, component of the lipopolysaccharide transport and assembly complex. Interacts with LptE and LptA.

Its subcellular location is the cell outer membrane. In terms of biological role, together with LptE, is involved in the assembly of lipopolysaccharide (LPS) at the surface of the outer membrane. The protein is LPS-assembly protein LptD of Marinobacter nauticus (strain ATCC 700491 / DSM 11845 / VT8) (Marinobacter aquaeolei).